Here is a 446-residue protein sequence, read N- to C-terminus: Phosphoglucosamine mutase (446 aa).

Serine 101 serves as the catalytic Phosphoserine intermediate. Mg(2+) contacts are provided by serine 101, aspartate 240, aspartate 242, and aspartate 244. Serine 101 carries the phosphoserine modification.

This sequence belongs to the phosphohexose mutase family. It depends on Mg(2+) as a cofactor. In terms of processing, activated by phosphorylation.

It carries out the reaction alpha-D-glucosamine 1-phosphate = D-glucosamine 6-phosphate. Functionally, catalyzes the conversion of glucosamine-6-phosphate to glucosamine-1-phosphate. This chain is Phosphoglucosamine mutase, found in Coxiella burnetii (strain CbuK_Q154) (Coxiella burnetii (strain Q154)).